The primary structure comprises 248 residues: Putative imidazole glycerol phosphate synthase subunit hisF2 (248 aa).

The active site involves Asp-129.

Belongs to the HisA/HisF family. In terms of assembly, heterodimer of HisH and HisF.

It is found in the cytoplasm. The catalysed reaction is 5-[(5-phospho-1-deoxy-D-ribulos-1-ylimino)methylamino]-1-(5-phospho-beta-D-ribosyl)imidazole-4-carboxamide + L-glutamine = D-erythro-1-(imidazol-4-yl)glycerol 3-phosphate + 5-amino-1-(5-phospho-beta-D-ribosyl)imidazole-4-carboxamide + L-glutamate + H(+). It participates in amino-acid biosynthesis; L-histidine biosynthesis; L-histidine from 5-phospho-alpha-D-ribose 1-diphosphate: step 5/9. IGPS catalyzes the conversion of PRFAR and glutamine to IGP, AICAR and glutamate. The HisF subunit catalyzes the cyclization activity that produces IGP and AICAR from PRFAR using the ammonia provided by the HisH subunit. This Campylobacter jejuni subsp. jejuni serotype O:2 (strain ATCC 700819 / NCTC 11168) protein is Putative imidazole glycerol phosphate synthase subunit hisF2 (hisF2).